The chain runs to 731 residues: RNA-binding protein RMD9-like, mitochondrial (731 aa).

The segment covering 1–10 has biased composition (polar residues); the sequence is MIRLAQQTQV. 3 disordered regions span residues 1 to 29, 77 to 133, and 590 to 630; these read MIRL…NSLT, GGNI…GNSI, and QNDR…FNNP. Residues 83–100 show a composition bias toward low complexity; that stretch reads NNNNHLAQNNSNNSNNHH. The span at 101-122 shows a compositional bias: basic residues; that stretch reads NNNRNHHHNNNRNHHQNNHNHS. Ser-132 carries the post-translational modification Phosphoserine. The segment covering 598-617 has biased composition (polar residues); the sequence is SNMNSTQISRTATPSPSLTP.

Belongs to the RMD9 family. Monomer. Phosphorylated. Phosphorylation promotes binding to RNA.

The protein localises to the mitochondrion inner membrane. Its function is as follows. May be involved in the processing or stability of mitochondrial mRNAs. The polypeptide is RNA-binding protein RMD9-like, mitochondrial (Saccharomyces cerevisiae (strain ATCC 204508 / S288c) (Baker's yeast)).